The chain runs to 350 residues: Arabinogalactan endo-beta-1,4-galactanase (350 aa).

The N-terminal stretch at 1–16 is a signal peptide; the sequence is MFASLLLAALPLLTHA. Residue N128 is glycosylated (N-linked (GlcNAc...) asparagine). E152 (proton donor) is an active-site residue. E262 functions as the Nucleophile in the catalytic mechanism.

It belongs to the glycosyl hydrolase 53 family. Post-translationally, glycosylated.

The enzyme catalyses The enzyme specifically hydrolyzes (1-&gt;4)-beta-D-galactosidic linkages in type I arabinogalactans.. In Aspergillus aculeatus, this protein is Arabinogalactan endo-beta-1,4-galactanase (gal1).